The chain runs to 437 residues: Adenylosuccinate synthetase (437 aa).

GTP-binding positions include 12-18 (GDEGKGK) and 40-42 (GHT). D13 (proton acceptor) is an active-site residue. Mg(2+) contacts are provided by D13 and G40. IMP-binding positions include 13-16 (DEGK), 38-41 (NAGH), T131, R145, Q225, and T240. H41 serves as the catalytic Proton donor. Positions 281 to 304 (TELLGADGKPDADGERLGTRGHEF) are disordered. Residues 288–303 (GKPDADGERLGTRGHE) show a composition bias toward basic and acidic residues. A substrate-binding site is contributed by 306–312 (TTTGRQR). R310 serves as a coordination point for IMP. GTP contacts are provided by residues R312, 338–340 (KLD), and 420–422 (STS).

It belongs to the adenylosuccinate synthetase family. In terms of assembly, homodimer. Mg(2+) serves as cofactor.

Its subcellular location is the cytoplasm. The catalysed reaction is IMP + L-aspartate + GTP = N(6)-(1,2-dicarboxyethyl)-AMP + GDP + phosphate + 2 H(+). Its pathway is purine metabolism; AMP biosynthesis via de novo pathway; AMP from IMP: step 1/2. Functionally, plays an important role in the de novo pathway of purine nucleotide biosynthesis. Catalyzes the first committed step in the biosynthesis of AMP from IMP. The protein is Adenylosuccinate synthetase of Ruegeria sp. (strain TM1040) (Silicibacter sp.).